The chain runs to 415 residues: Phosphoribosylamine--glycine ligase (415 aa).

An ATP-grasp domain is found at 108-311 (KKIMEKYNIP…LMQHIIDLDE (204 aa)). An ATP-binding site is contributed by 134-191 (IENCEFPVVVKKDGLAAGKGVIIADTIEAARSAIEIMYGDEEEGTVVFETFLEGEEFS). Positions 281 and 283 each coordinate Mg(2+).

It belongs to the GARS family. It depends on Mg(2+) as a cofactor. Requires Mn(2+) as cofactor.

The enzyme catalyses 5-phospho-beta-D-ribosylamine + glycine + ATP = N(1)-(5-phospho-beta-D-ribosyl)glycinamide + ADP + phosphate + H(+). It functions in the pathway purine metabolism; IMP biosynthesis via de novo pathway; N(1)-(5-phospho-D-ribosyl)glycinamide from 5-phospho-alpha-D-ribose 1-diphosphate: step 2/2. In Staphylococcus aureus (strain MRSA252), this protein is Phosphoribosylamine--glycine ligase.